The primary structure comprises 204 residues: Matrix-remodeling-associated protein 7 (204 aa).

A helical membrane pass occupies residues 7-27; the sequence is LLAALPALATALALLLAWLLV. The tract at residues 32-148 is disordered; that stretch reads AASPEPARAP…FSFKYSPGKL (117 aa). A compositionally biased stretch (pro residues) spans 38-47; sequence ARAPPEPAPP. Residues 63 to 103 are compositionally biased toward low complexity; it reads EPAASPAGPEEPGEPAGLGELGEPAGPGEPEGPGDPAAAPA. The segment covering 110-126 has biased composition (basic and acidic residues); the sequence is VEARQEEEQDLDGEKGP. Residue Ser-191 is modified to Phosphoserine.

Its subcellular location is the membrane. The protein is Matrix-remodeling-associated protein 7 (MXRA7) of Homo sapiens (Human).